A 404-amino-acid polypeptide reads, in one-letter code: Dihydrolipoyllysine-residue acetyltransferase component of pyruvate dehydrogenase complex (404 aa).

A Lipoyl-binding domain is found at 2–78 (PIKILMPALS…PVNSLIAVLS (77 aa)). An N6-lipoyllysine modification is found at K43. The Peripheral subunit-binding (PSBD) domain occupies 128–165 (FASPLAKRLAKIRNIRLESVQGSGPHGRIVKQDILSYS). H377 is a catalytic residue.

This sequence belongs to the 2-oxoacid dehydrogenase family. Forms a 24-polypeptide structural core with octahedral symmetry. The cofactor is (R)-lipoate.

It carries out the reaction N(6)-[(R)-dihydrolipoyl]-L-lysyl-[protein] + acetyl-CoA = N(6)-[(R)-S(8)-acetyldihydrolipoyl]-L-lysyl-[protein] + CoA. Its function is as follows. The pyruvate dehydrogenase complex catalyzes the overall conversion of pyruvate to acetyl-CoA and CO(2). It contains multiple copies of three enzymatic components: pyruvate dehydrogenase (E1), dihydrolipoamide acetyltransferase (E2) and lipoamide dehydrogenase (E3). The protein is Dihydrolipoyllysine-residue acetyltransferase component of pyruvate dehydrogenase complex (pdhC) of Rickettsia typhi (strain ATCC VR-144 / Wilmington).